Reading from the N-terminus, the 235-residue chain is (5-formylfuran-3-yl)methyl phosphate synthase (235 aa).

Residue K27 is the Schiff-base intermediate with substrate of the active site. Residue K86 is the Proton acceptor of the active site.

This sequence belongs to the MfnB family.

It catalyses the reaction 2 D-glyceraldehyde 3-phosphate = 4-(hydroxymethyl)-2-furancarboxaldehyde phosphate + phosphate + 2 H2O. The protein operates within cofactor biosynthesis; methanofuran biosynthesis. Functionally, catalyzes the formation of 4-(hydroxymethyl)-2-furancarboxaldehyde phosphate (4-HFC-P) from two molecules of glyceraldehyde-3-P (GA-3-P). The chain is (5-formylfuran-3-yl)methyl phosphate synthase from Archaeoglobus fulgidus (strain ATCC 49558 / DSM 4304 / JCM 9628 / NBRC 100126 / VC-16).